The sequence spans 1040 residues: Multidrug resistance protein MdtB (1040 aa).

Helical transmembrane passes span 16-36, 347-367, 369-389, 396-416, 440-460, 472-492, 537-557, 863-883, 888-908, 911-931, 968-988, and 998-1018; these read FIMR…AGII, LMMA…NIPA, IIPG…MVFL, LTLM…IVVI, IGFT…PLLF, FAIT…TLTP, WLTL…WVFI, LGST…VLGI, FIHP…ALLA, IAGS…IGIV, ILMT…STGV, and IGMV…TPVI.

This sequence belongs to the resistance-nodulation-cell division (RND) (TC 2.A.6) family. MdtB subfamily. In terms of assembly, part of a tripartite efflux system composed of MdtA, MdtB and MdtC. MdtB forms a heteromultimer with MdtC.

It localises to the cell inner membrane. The MdtABC tripartite complex confers resistance against novobiocin and deoxycholate. This chain is Multidrug resistance protein MdtB, found in Escherichia coli O45:K1 (strain S88 / ExPEC).